Consider the following 166-residue polypeptide: NAD(P)H-quinone oxidoreductase subunit I, chloroplastic (166 aa).

4Fe-4S ferredoxin-type domains are found at residues 55–84 (GRIH…VDWK) and 95–124 (LNYS…MTEE). [4Fe-4S] cluster-binding residues include cysteine 64, cysteine 67, cysteine 70, cysteine 74, cysteine 104, cysteine 107, cysteine 110, and cysteine 114.

This sequence belongs to the complex I 23 kDa subunit family. NDH is composed of at least 16 different subunits, 5 of which are encoded in the nucleus. It depends on [4Fe-4S] cluster as a cofactor.

It localises to the plastid. It is found in the chloroplast thylakoid membrane. It carries out the reaction a plastoquinone + NADH + (n+1) H(+)(in) = a plastoquinol + NAD(+) + n H(+)(out). It catalyses the reaction a plastoquinone + NADPH + (n+1) H(+)(in) = a plastoquinol + NADP(+) + n H(+)(out). NDH shuttles electrons from NAD(P)H:plastoquinone, via FMN and iron-sulfur (Fe-S) centers, to quinones in the photosynthetic chain and possibly in a chloroplast respiratory chain. The immediate electron acceptor for the enzyme in this species is believed to be plastoquinone. Couples the redox reaction to proton translocation, and thus conserves the redox energy in a proton gradient. This Chaenactis santolinoides (Santolina pincushion) protein is NAD(P)H-quinone oxidoreductase subunit I, chloroplastic.